We begin with the raw amino-acid sequence, 513 residues long: Histidine ammonia-lyase (513 aa).

Positions 143–145 (ASG) form a cross-link, 5-imidazolinone (Ala-Gly). Residue S144 is modified to 2,3-didehydroalanine (Ser).

Belongs to the PAL/histidase family. Post-translationally, contains an active site 4-methylidene-imidazol-5-one (MIO), which is formed autocatalytically by cyclization and dehydration of residues Ala-Ser-Gly.

The protein resides in the cytoplasm. The catalysed reaction is L-histidine = trans-urocanate + NH4(+). It participates in amino-acid degradation; L-histidine degradation into L-glutamate; N-formimidoyl-L-glutamate from L-histidine: step 1/3. The chain is Histidine ammonia-lyase from Paracoccus denitrificans (strain Pd 1222).